We begin with the raw amino-acid sequence, 253 residues long: MVSSSATAPRSGFYYFSQGWKLVTQPGIRRFVILPLLVNILLMGGAFWWLFTQLDVWIPSLMSHVPDWLQWLSYLLWPIAVISVLLVFGYFFSTIANWIAAPFNGLLAEQLEARLTGATPPDTGVLGIMKDVPRIMKREWQKFIWYLPRAIVLLILYFIPGVGQTVAPVLWFLFSAWMLAIQYCDYPFDNHKVPFKEMRTALRTQKVANMQFGALTSLFTMIPVLNLVIMPVAVCGATAMWVDCYRSKHALWK.

4 helical membrane-spanning segments follow: residues 31 to 51, 75 to 95, 151 to 171, and 222 to 242; these read FVILPLLVNILLMGGAFWWLF, LLWPIAVISVLLVFGYFFSTI, IVLLILYFIPGVGQTVAPVLW, and IPVLNLVIMPVAVCGATAMWV.

It belongs to the CysZ family.

It is found in the cell inner membrane. Functionally, high affinity, high specificity proton-dependent sulfate transporter, which mediates sulfate uptake. Provides the sulfur source for the cysteine synthesis pathway. The chain is Sulfate transporter CysZ from Citrobacter koseri (strain ATCC BAA-895 / CDC 4225-83 / SGSC4696).